Consider the following 153-residue polypeptide: Ergochrome gene cluster protein CPUR_05425 (153 aa).

It functions in the pathway pigment biosynthesis. Its function is as follows. Part of the ergochrome gene cluster responsible for the typical purple-black color of the ergot sclerotia. The ergochrome gene cluster produces several ergot pigments including the yellow ergochrome secalonic acid and its derivatives, as well as the red anthraquinones endocrocin and clavorubin. The pathway begins with the synthesis of atrochrysone thioester by the polyketide synthase (PKS) CPUR_05437. The atrochrysone carboxyl ACP thioesterase CPUR_05436 then breaks the thioester bond and releases the atrochrysone carboxylic acid from CPUR_05437. The atrochrysone carboxylic acid is then converted to atrochrysone which is further transformed into emodin anthrone. The next step is performed by the anthrone oxygenase CPUR_05434 that catalyzes the oxidation of emodinanthrone to emodin. Emodin is further modified to yield monodictyphenone via several steps involving CPUR_05427, CPUR_05428, CPUR_05429 and CPUR_05430. The short chain dehydrogenase/reductase CPUR_05418 then catalyzes the C-5 ketoreduction to give the xanthone skeleton of the monomeric units. Ergochromes formation requires further dimerization steps of different xanthone units, probably catalyzed by the cytochrome P450 monooxygenase CPUR_05419. CPUR_05425, CPUR_05426 and CPUR_05431 are unique to Claviceps, thus it is likely that they are involved in further modification of xanthone units or in their dimerization. The yellow ergochromes and the red anthraquinone pigments endocrocin and clavorubin are products from the same PKS derived precursors and the latter are likely shunt products in the pathway of xanthone biosynthesis. It is proposed that atrochrysone carboxylic acid released from the PKS CPUR_05437 can also be converted to endocrocin anthrone which is further oxidized into endocrocin by CPUR_05435. Endocrocin could be then modified to clavorubin, possibly by CPUR_05423 and CPUR_05431. Clavorubin is the principal anthraquinone metabolite produced by the cluster with a much higher yield compared to endocrocin. In Claviceps purpurea (strain 20.1) (Ergot fungus), this protein is Ergochrome gene cluster protein CPUR_05425.